Here is a 434-residue protein sequence, read N- to C-terminus: MIKLTKAEKNGLHGEITVPGDKSISHRALMFGAIAEGKTVIDNFLMSDDVMHTMGVFRALGVEIDHTESQATVIGKGLTNFKAPSAGLDMGNSGTSTRLLMGLLSKQPFDLNIFGDSSLSKRPLRRVADPLSMMNAQFELSNDEFLPAVIKANTELNGITYHMPVASAQVKSAILLAGIQAEGETTIIEDLPSRDHTERMLRQFGGQIKTDNGVITVKKQSKLSGQHVLVPSDISSAAFFMVAGLITPNSEITIKKVGVNPTRDGVIKLLERMGAEITQKPIASDGEPLADITVKAQTLHGIAITAEDIPGAVDELPILALAATQAVGDTIISGAEELRVKETDRISTVISELTKLGADIDEKPDGMVIHGGTLLHTSNGSTLLDSHGDHRIGMMNVIASLITEGDVVLTGEEAMSVSYPGFVEDVSSIKREWL.

Lys-22, Ser-23, and Arg-27 together coordinate 3-phosphoshikimate. Lys-22 is a phosphoenolpyruvate binding site. Gly-94 and Arg-122 together coordinate phosphoenolpyruvate. Residues Ser-167, Gln-169, Asp-314, and Lys-341 each contribute to the 3-phosphoshikimate site. Position 169 (Gln-169) interacts with phosphoenolpyruvate. The active-site Proton acceptor is Asp-314. Phosphoenolpyruvate contacts are provided by Arg-345 and Arg-391.

The protein belongs to the EPSP synthase family. As to quaternary structure, monomer.

Its subcellular location is the cytoplasm. It carries out the reaction 3-phosphoshikimate + phosphoenolpyruvate = 5-O-(1-carboxyvinyl)-3-phosphoshikimate + phosphate. It participates in metabolic intermediate biosynthesis; chorismate biosynthesis; chorismate from D-erythrose 4-phosphate and phosphoenolpyruvate: step 6/7. In terms of biological role, catalyzes the transfer of the enolpyruvyl moiety of phosphoenolpyruvate (PEP) to the 5-hydroxyl of shikimate-3-phosphate (S3P) to produce enolpyruvyl shikimate-3-phosphate and inorganic phosphate. This Leuconostoc mesenteroides subsp. mesenteroides (strain ATCC 8293 / DSM 20343 / BCRC 11652 / CCM 1803 / JCM 6124 / NCDO 523 / NBRC 100496 / NCIMB 8023 / NCTC 12954 / NRRL B-1118 / 37Y) protein is 3-phosphoshikimate 1-carboxyvinyltransferase.